A 201-amino-acid polypeptide reads, in one-letter code: Glutathione peroxidase 1, mitochondrial (201 aa).

The N-terminal 27 residues, 1–27, are a transit peptide targeting the mitochondrion; the sequence is MLLTRKNVAVRPARAARRDVRAMSLLG. Residue Sec-75 is part of the active site. Position 75 (Sec-75) is a non-standard amino acid, selenocysteine.

The protein resides in the mitochondrion. The enzyme catalyses 2 glutathione + H2O2 = glutathione disulfide + 2 H2O. May constitute a glutathione peroxidase-like protective system against oxidative stresses. Hydrogen peroxide, tert-butyl hydroperoxide and cumene, but not phosphatidylcholine hydroperoxide, can act as acceptors. In Chlamydomonas reinhardtii (Chlamydomonas smithii), this protein is Glutathione peroxidase 1, mitochondrial.